Here is a 65-residue protein sequence, read N- to C-terminus: Large ribosomal subunit protein bL32 (65 aa).

A compositionally biased stretch (basic residues) spans 1 to 19 (MAVQKSRKTPSKRGMRRSH). The tract at residues 1–32 (MAVQKSRKTPSKRGMRRSHNALVKSTLSEDQE) is disordered.

The protein belongs to the bacterial ribosomal protein bL32 family.

The polypeptide is Large ribosomal subunit protein bL32 (Vesicomyosocius okutanii subsp. Calyptogena okutanii (strain HA)).